The following is a 318-amino-acid chain: tRNA methyltransferase 10 homolog B (318 aa).

Residues 1 to 10 are compositionally biased toward basic and acidic residues; it reads MDCKSEESAQ. A disordered region spans residues 1-105; that stretch reads MDCKSEESAQ…DPGNGTCPQH (105 aa). A compositionally biased stretch (polar residues) spans 52-63; that stretch reads SPANSAVWSSKN. The span at 64-83 shows a compositional bias: basic residues; that stretch reads MQRKQRHWERIVSSKKSKRK. Residues 72–93 are a coiled coil; it reads ERIVSSKKSKRKQERERRKAKR. A compositionally biased stretch (basic and acidic residues) spans 84–96; that stretch reads QERERRKAKRAED. Positions 114 to 311 constitute an SAM-dependent MTase TRM10-type domain; it reads TKEKLLEAKH…KGVSPGKGYV (198 aa).

It belongs to the class IV-like SAM-binding methyltransferase superfamily. TRM10 family.

It carries out the reaction guanosine(9) in tRNA + S-adenosyl-L-methionine = N(1)-methylguanosine(9) in tRNA + S-adenosyl-L-homocysteine + H(+). Its function is as follows. S-adenosyl-L-methionine-dependent guanine N(1)-methyltransferase that catalyzes the formation of N(1)-methylguanine at position 9 (m1G9) in tRNAs. Probably not able to catalyze formation of N(1)-methyladenine at position 9 (m1A9) in tRNAs. In Mus musculus (Mouse), this protein is tRNA methyltransferase 10 homolog B (Trmt10b).